A 159-amino-acid polypeptide reads, in one-letter code: Large ribosomal subunit protein uL15 (159 aa).

Positions 1 to 39 are disordered; the sequence is MKLNELSPADGSTKKRMRVGRGVGSGKGKTAGRGVKGQN. The span at 21-35 shows a compositional bias: gly residues; the sequence is RGVGSGKGKTAGRGV.

It belongs to the universal ribosomal protein uL15 family. Part of the 50S ribosomal subunit.

Functionally, binds to the 23S rRNA. The polypeptide is Large ribosomal subunit protein uL15 (Hyphomonas neptunium (strain ATCC 15444)).